The chain runs to 231 residues: MNDPRIIVALDFPDQCTALNFAAGLDSTLCRVKVGKELFTLAGPQLVEKLMKLGFDVFLDLKFHDIPNTVAAACSAASSLGVWMVNVHALGGSKMLLAARQALDGKRTRLIAVTLLTSLNQNDLSELGIADTPETMVQRLALLAQRCGLDGVVCSALEAVSLREVTGEDFCLVTPGIRSFGDGNDDQARIATPAMAIRSGASYLVIGRPITRSPDPLGALRRFNDEVASVL.

Substrate is bound by residues D11, K33, 60-69 (DLKFHDIPNT), T117, R178, Q187, G207, and R208. K62 acts as the Proton donor in catalysis.

It belongs to the OMP decarboxylase family. Type 1 subfamily. Homodimer.

It carries out the reaction orotidine 5'-phosphate + H(+) = UMP + CO2. It participates in pyrimidine metabolism; UMP biosynthesis via de novo pathway; UMP from orotate: step 2/2. Its function is as follows. Catalyzes the decarboxylation of orotidine 5'-monophosphate (OMP) to uridine 5'-monophosphate (UMP). The polypeptide is Orotidine 5'-phosphate decarboxylase (Nitrosomonas europaea (strain ATCC 19718 / CIP 103999 / KCTC 2705 / NBRC 14298)).